The chain runs to 197 residues: Rac-like GTP-binding protein RHO1 (197 aa).

GTP is bound at residue Gly13 to Thr20. An Effector region motif is present at residues Tyr35–Phe43. Residues Asp60–Gln64 and Thr118–Asp121 each bind GTP. Cys194 is modified (cysteine methyl ester). Cys194 carries the S-geranylgeranyl cysteine lipid modification. Residues Ser195–Leu197 constitute a propeptide, removed in mature form.

Belongs to the small GTPase superfamily. Rho family. Expressed at the tip of pollen tubes.

It is found in the cytoplasm. Its subcellular location is the membrane. Functionally, inactive GDP-bound Rho GTPases reside in the cytosol, are found in a complex with Rho GDP-dissociation inhibitors (Rho GDIs), and are released from the GDI protein in order to translocate to membranes upon activation. May be involved in cell polarity control during the actin-dependent tip growth of pollen tubes. This Pisum sativum (Garden pea) protein is Rac-like GTP-binding protein RHO1 (RHO1).